Here is an 852-residue protein sequence, read N- to C-terminus: GPI ethanolamine phosphate transferase 2 (852 aa).

2 N-linked (GlcNAc...) asparagine glycosylation sites follow: N191 and N420. 3 helical membrane passes run 458–478 (LIRLYVGLSISGFAISLTFFP), 486–506 (FAPAGMFLGFSILSYSTMMFA), and 516–536 (FWYWISMGWVVYLHVKYAGHF). N-linked (GlcNAc...) asparagine glycosylation occurs at N576. The next 6 helical transmembrane spans lie at 632–652 (LLYHARMVLCGISLLMIYSLY), 676–696 (TLTLFLLMQSKVTNIPAFLVF), 714–734 (TITSLLMQYVTFYAFGGSNAI), 750–770 (SVFIVGALTFISNWAAPIWWV), 787–807 (AHVTILTLHMATILMSVMAAC), and 824–844 (YLYTIAWAMINHIVVNVLGEI).

This sequence belongs to the PIGG/PIGN/PIGO family. PIGG subfamily.

The protein localises to the endoplasmic reticulum membrane. The protein operates within glycolipid biosynthesis; glycosylphosphatidylinositol-anchor biosynthesis. Its function is as follows. Ethanolamine phosphate transferase involved in glycosylphosphatidylinositol-anchor biosynthesis. Transfers ethanolamine phosphate to the GPI second mannose. This Aspergillus oryzae (strain ATCC 42149 / RIB 40) (Yellow koji mold) protein is GPI ethanolamine phosphate transferase 2 (las21).